The following is a 448-amino-acid chain: MERIKFDYSKALPFVSEREVAYFENFVRSAHDMLHNKTGAGNDFVGWVDLPVNYDREEFARIKAAAEKIKSDSDALVVIGIGGSYLGARAAIEMLSHSFHNLMPKSKRNAPEIYFVGNNISSTYIADLLEVIEGKEISVNVISKSGTTTEPAIAFRIFKEYMENKYGKDGASKRIYATTDKEKGALRKLATEEGYETFVVPDDIGGRFSVLTAVGLLPIAVAGIDIDSMMKGAADARELYSNPNLMENDCYKYAAVRNALYRKNKTIEIMVNYEPSLHYFTEWWKQLYGESEGKDQKGIFPAGVDFTTDLHSMGQYIQDGLRNIFETVIRVEKPRKNIVIKEEKDNLDGLNFIAGKDVDYVNKKAMEGTVLAHTDGGVPNLVVTVPELSAYYFGNMVYFFEKACGISGYLLGVNPFDQPGVEAYKKNMFALLGKPGYEEQRKKLEERL.

E290 serves as the catalytic Proton donor. Residues H311 and K425 contribute to the active site.

The protein belongs to the GPI family.

It localises to the cytoplasm. It carries out the reaction alpha-D-glucose 6-phosphate = beta-D-fructose 6-phosphate. It participates in carbohydrate biosynthesis; gluconeogenesis. Its pathway is carbohydrate degradation; glycolysis; D-glyceraldehyde 3-phosphate and glycerone phosphate from D-glucose: step 2/4. In terms of biological role, catalyzes the reversible isomerization of glucose-6-phosphate to fructose-6-phosphate. The sequence is that of Glucose-6-phosphate isomerase from Acetivibrio thermocellus (strain ATCC 27405 / DSM 1237 / JCM 9322 / NBRC 103400 / NCIMB 10682 / NRRL B-4536 / VPI 7372) (Clostridium thermocellum).